The chain runs to 1305 residues: DNA-directed DNA polymerase (1305 aa).

It belongs to the DNA polymerase type-C family.

The enzyme catalyses DNA(n) + a 2'-deoxyribonucleoside 5'-triphosphate = DNA(n+1) + diphosphate. Replicates viral genomic DNA. In Bacillus pumilus (Bacillus mesentericus), this protein is DNA-directed DNA polymerase.